The primary structure comprises 532 residues: Monolignol oxidoreductase AtBBE-like 15 (532 aa).

An N-terminal signal peptide occupies residues 1–27; that stretch reads MAFAISKRNATLFLVTLLLISVPLSSS. C36 and C100 are disulfide-bonded. The N-linked (GlcNAc...) asparagine glycan is linked to N57. One can recognise an FAD-binding PCMH-type domain in the interval 76–254; sequence TPSNPKPVFI…LAWKIKLVPV (179 aa). Residues 115–179 constitute a cross-link (6-(S-cysteinyl)-8alpha-(pros-histidyl)-FAD (His-Cys)); it reads HDYEGLSFVA…QTHGFPAGLC (65 aa). N-linked (GlcNAc...) asparagine glycosylation is found at N306 and N431.

Belongs to the oxygen-dependent FAD-linked oxidoreductase family. The cofactor is FAD. In terms of processing, the FAD cofactor is bound via a bicovalent 6-S-cysteinyl, 8alpha-N1-histidyl FAD linkage. In terms of tissue distribution, expressed in sepals and stamen.

Its subcellular location is the secreted. The protein localises to the cell wall. It catalyses the reaction (E)-4-coumaroyl alcohol + A = (E)-4-coumaraldehyde + AH2. The catalysed reaction is (E)-coniferol + A = (E)-coniferaldehyde + AH2. The enzyme catalyses (E)-sinapyl alcohol + A = (E)-sinapaldehyde + AH2. It carries out the reaction 4-O-(beta-D-glucosyl)-(E)-coniferol + A = 4-O-(beta-D-glucosyl)-4-(E)-coniferyl aldehyde + AH2. Required for endosperm development and polar nuclei fusion. Mediates oxidation of p-hydroxylated derivatives of cinnamyl alcohol (i.e. the monolignols p-coumaryl-, coniferyl-, and sinapyl alcohol) to their corresponding aldehydes. Can also use the beta-O-glycosylated form of coniferyl alcohol (coniferin) as substrate, but is much less efficient towards cinnamyl alcohol. The electron acceptor required for these reactions is not known, but does not seem to be dioxygen. The polypeptide is Monolignol oxidoreductase AtBBE-like 15 (Arabidopsis thaliana (Mouse-ear cress)).